The primary structure comprises 207 residues: MANTTIIGIAGGSGSGKTTVTNEIMKNLEGHSVALLAQDYYYKDQSHLTFEERLETNYDHPFAFDNDLLIENLKDLRNGHAVEVPTYDYTNHTRSNETIAFEPKDVIIVEGIFALENKTLRDMMDVKIYVDTDADLRILRRLVRDTKERGRSMESVINQYLNVVKPMHNQFIEPTKKYADIIIPEGGSNKVAIDIMTTKIQTLVSKQ.

11 to 18 (GGSGSGKT) lines the ATP pocket.

It belongs to the uridine kinase family.

The protein localises to the cytoplasm. It carries out the reaction uridine + ATP = UMP + ADP + H(+). The catalysed reaction is cytidine + ATP = CMP + ADP + H(+). The protein operates within pyrimidine metabolism; CTP biosynthesis via salvage pathway; CTP from cytidine: step 1/3. It functions in the pathway pyrimidine metabolism; UMP biosynthesis via salvage pathway; UMP from uridine: step 1/1. The protein is Uridine kinase of Staphylococcus haemolyticus (strain JCSC1435).